Consider the following 126-residue polypeptide: Putative 15 kDa capsid protein (126 aa).

It is found in the virion. The chain is Putative 15 kDa capsid protein (P15) from Bombyx mori nuclear polyhedrosis virus (BmNPV).